The primary structure comprises 258 residues: Axonemal dynein light intermediate polypeptide 1 (258 aa).

2 disordered regions span residues 19–60 (RNTE…CVPD) and 207–231 (VNEQ…EEKK). The segment covering 34-48 (SPQQPGPSGSAPQLP) has biased composition (low complexity). Residues 176-255 (MRKALQAEQG…LKAQLEGIIA (80 aa)) adopt a coiled-coil conformation.

Belongs to the inner dynein arm light chain family. In terms of assembly, interacts with CFAP45. Interacts with DYNC1H1.

Its subcellular location is the cell projection. The protein localises to the cilium. It localises to the flagellum. It is found in the dynein axonemal particle. The protein resides in the cytoplasm. In terms of biological role, involved in sperm flagellum assembly. The chain is Axonemal dynein light intermediate polypeptide 1 (DNALI1) from Macaca fascicularis (Crab-eating macaque).